The primary structure comprises 766 residues: Dipeptidyl peptidase 4 (766 aa).

Residues 1-6 (MKTPWK) lie on the Cytoplasmic side of the membrane. Residues 7 to 28 (VLLGLLGAAALVTIITVPVVLL) traverse the membrane as a helical; Signal-anchor for type II membrane protein segment. Topologically, residues 29–766 (NKGTDDATAD…HFIKQCFSLP (738 aa)) are extracellular. 7 N-linked (GlcNAc...) asparagine glycosylation sites follow: Asn-85, Asn-92, Asn-150, Asn-219, Asn-229, Asn-281, and Asn-321. 4 cysteine pairs are disulfide-bonded: Cys-328–Cys-339, Cys-385–Cys-394, Cys-444–Cys-447, and Cys-454–Cys-472. N-linked (GlcNAc...) asparagine glycosylation is present at Asn-520. Residue Ser-630 is the Charge relay system of the active site. Residues Cys-649 and Cys-762 are joined by a disulfide bond. Asn-685 carries an N-linked (GlcNAc...) asparagine glycan. Residues Asp-708 and His-740 each act as charge relay system in the active site.

This sequence belongs to the peptidase S9B family. DPPIV subfamily. In terms of assembly, monomer. Homodimer. Heterodimer with Seprase (FAP). Requires homodimerization for optimal dipeptidyl peptidase activity and T-cell costimulation. Found in a membrane raft complex, at least composed of BCL10, CARD11, DPP4 and IKBKB. Associates with collagen. Interacts with PTPRC; the interaction is enhanced in an interleukin-12-dependent manner in activated lymphocytes. Interacts (via extracellular domain) with ADA; does not inhibit its dipeptidyl peptidase activity. Interacts with CAV1 (via the N-terminus); the interaction is direct. Interacts (via cytoplasmic tail) with CARD11 (via PDZ domain); its homodimerization is necessary for interaction with CARD11. Interacts with IGF2R; the interaction is direct. Interacts with GPC3. Interacts with human coronavirus-EMC spike protein and acts as a receptor for this virus. (Microbial infection) Interacts with MERS coronavirus/MERS-CoV spike protein. The soluble form (Dipeptidyl peptidase 4 soluble form also named SDPP) derives from the membrane form (Dipeptidyl peptidase 4 membrane form also named MDPP) by proteolytic processing. Post-translationally, N- and O-Glycosylated. In terms of processing, phosphorylated. Mannose 6-phosphate residues in the carbohydrate moiety are necessary for interaction with IGF2R in activated T-cells. Mannose 6-phosphorylation is induced during T-cell activation. As to expression, expressed specifically in lymphatic vessels but not in blood vessels in the skin, small intestine, esophagus, ovary, breast and prostate glands. Not detected in lymphatic vessels in the lung, kidney, uterus, liver and stomach (at protein level). Expressed in the poorly differentiated crypt cells of the small intestine as well as in the mature villous cells. Expressed at very low levels in the colon.

Its subcellular location is the secreted. It is found in the cell membrane. The protein resides in the apical cell membrane. It localises to the cell projection. The protein localises to the invadopodium membrane. Its subcellular location is the lamellipodium membrane. It is found in the cell junction. The protein resides in the membrane raft. It catalyses the reaction Release of an N-terminal dipeptide, Xaa-Yaa-|-Zaa-, from a polypeptide, preferentially when Yaa is Pro, provided Zaa is neither Pro nor hydroxyproline.. Its activity is regulated as follows. Inhibited by GPC3 and diprotin A. Cell surface glycoprotein receptor involved in the costimulatory signal essential for T-cell receptor (TCR)-mediated T-cell activation. Acts as a positive regulator of T-cell coactivation, by binding at least ADA, CAV1, IGF2R, and PTPRC. Its binding to CAV1 and CARD11 induces T-cell proliferation and NF-kappa-B activation in a T-cell receptor/CD3-dependent manner. Its interaction with ADA also regulates lymphocyte-epithelial cell adhesion. In association with FAP is involved in the pericellular proteolysis of the extracellular matrix (ECM), the migration and invasion of endothelial cells into the ECM. May be involved in the promotion of lymphatic endothelial cells adhesion, migration and tube formation. When overexpressed, enhanced cell proliferation, a process inhibited by GPC3. Also acts as a serine exopeptidase with a dipeptidyl peptidase activity that regulates various physiological processes by cleaving peptides in the circulation, including many chemokines, mitogenic growth factors, neuropeptides and peptide hormones such as brain natriuretic peptide 32. Removes N-terminal dipeptides sequentially from polypeptides having unsubstituted N-termini provided that the penultimate residue is proline. Functionally, (Microbial infection) Acts as a receptor for human coronavirus MERS-CoV-2. This Homo sapiens (Human) protein is Dipeptidyl peptidase 4.